We begin with the raw amino-acid sequence, 265 residues long: Speedy protein E8 (265 aa).

Positions 1–80 (MGQILGKIMM…EPEKELAPEP (80 aa)) are disordered. Over residues 66–80 (DESDDEPEKELAPEP) the composition is skewed to acidic residues.

This sequence belongs to the Speedy/Ringo family.

This Homo sapiens (Human) protein is Speedy protein E8.